A 69-amino-acid polypeptide reads, in one-letter code: Brevinin-1CG5 (69 aa).

Positions 1-22 (MFTLKKSLLLLFFLGTINLSLC) are cleaved as a signal peptide. Residues 23 to 43 (EQERNAEEERRDDDEMDVEVE) constitute a propeptide, removed in mature form. Cysteines 63 and 69 form a disulfide.

It belongs to the frog skin active peptide (FSAP) family. Brevinin subfamily. In terms of tissue distribution, expressed by the skin glands.

Its subcellular location is the secreted. Its function is as follows. Antimicrobial peptide active against a variety of Gram-positive and Gram-negative bacterial strains. Has antifungal activity against C.albicans ATCC 10231 and a slime mold isolate. Has hemolytic activity against human erythrocytes. This chain is Brevinin-1CG5, found in Amolops chunganensis (Chungan torrent frog).